Consider the following 119-residue polypeptide: MKKVGEEEIKQEENEKEKIVKKLNESDVKSIIEDVLKNKEKYGLEARWLLGMDDNKNDSIEVLLGRVNFIEVERGFIEIVPMTRMVVLLKRVNYYTSNYTSYNDELYVFFYSVGWVKFS.

A coiled-coil region spans residues 1-29 (MKKVGEEEIKQEENEKEKIVKKLNESDVK).

This is an uncharacterized protein from Acidianus sp. F28 (AFV-2).